Reading from the N-terminus, the 405-residue chain is Glucose-1-phosphate adenylyltransferase (405 aa).

Alpha-D-glucose 1-phosphate-binding positions include Y96, G161, 176 to 177 (EK), and S194.

This sequence belongs to the bacterial/plant glucose-1-phosphate adenylyltransferase family. Homotetramer.

It carries out the reaction alpha-D-glucose 1-phosphate + ATP + H(+) = ADP-alpha-D-glucose + diphosphate. The protein operates within glycan biosynthesis; glycogen biosynthesis. Functionally, involved in the biosynthesis of ADP-glucose, a building block required for the elongation reactions to produce glycogen. Catalyzes the reaction between ATP and alpha-D-glucose 1-phosphate (G1P) to produce pyrophosphate and ADP-Glc. In Photobacterium profundum (strain SS9), this protein is Glucose-1-phosphate adenylyltransferase.